Consider the following 226-residue polypeptide: Deoxyribose-phosphate aldolase (226 aa).

The active-site Proton donor/acceptor is the aspartate 84. Lysine 146 (schiff-base intermediate with acetaldehyde) is an active-site residue. Residue lysine 188 is the Proton donor/acceptor of the active site.

It belongs to the DeoC/FbaB aldolase family. DeoC type 1 subfamily.

Its subcellular location is the cytoplasm. It catalyses the reaction 2-deoxy-D-ribose 5-phosphate = D-glyceraldehyde 3-phosphate + acetaldehyde. It functions in the pathway carbohydrate degradation; 2-deoxy-D-ribose 1-phosphate degradation; D-glyceraldehyde 3-phosphate and acetaldehyde from 2-deoxy-alpha-D-ribose 1-phosphate: step 2/2. Catalyzes a reversible aldol reaction between acetaldehyde and D-glyceraldehyde 3-phosphate to generate 2-deoxy-D-ribose 5-phosphate. This chain is Deoxyribose-phosphate aldolase, found in Pyrobaculum arsenaticum (strain DSM 13514 / JCM 11321 / PZ6).